Consider the following 270-residue polypeptide: F-actin-capping protein subunit beta (270 aa).

Positions 245 to 258 are enriched in polar residues; it reads QTRSQKSTTDSQEQ. Residues 245-270 form a disordered region; sequence QTRSQKSTTDSQEQQQKEVIKGLQNL.

It belongs to the F-actin-capping protein beta subunit family. As to quaternary structure, component of the F-actin capping complex, composed of a heterodimer of an alpha and a beta subunit.

It is found in the cytoplasm. The protein localises to the cytoskeleton. Its subcellular location is the actin patch. Functionally, F-actin-capping proteins bind in a Ca(2+)-independent manner to the fast growing ends of actin filaments (barbed end) thereby blocking the exchange of subunits at these ends. Unlike other capping proteins (such as gelsolin and severin), these proteins do not sever actin filaments. The protein is F-actin-capping protein subunit beta (CAP2) of Candida glabrata (strain ATCC 2001 / BCRC 20586 / JCM 3761 / NBRC 0622 / NRRL Y-65 / CBS 138) (Yeast).